Reading from the N-terminus, the 357-residue chain is Protein pelota homolog (357 aa).

Belongs to the eukaryotic release factor 1 family. Pelota subfamily. As to quaternary structure, monomer. A divalent metal cation is required as a cofactor.

The protein localises to the cytoplasm. Its function is as follows. May function in recognizing stalled ribosomes, interact with stem-loop structures in stalled mRNA molecules, and effect endonucleolytic cleavage of the mRNA. May play a role in the release non-functional ribosomes and degradation of damaged mRNAs. Has endoribonuclease activity. The polypeptide is Protein pelota homolog (Halobacterium salinarum (strain ATCC 29341 / DSM 671 / R1)).